The following is a 431-amino-acid chain: Reverse prenyltransferase criA (431 aa).

Residues Arg104, Lys193, Tyr195, Lys262, Tyr264, Tyr347, Tyr412, and Tyr416 each coordinate dimethylallyl diphosphate.

The protein belongs to the tryptophan dimethylallyltransferase family. In terms of assembly, monomer.

The catalysed reaction is cyclo(L-tryptophyl-L-alanyl) + dimethylallyl diphosphate = preechinulin + diphosphate. It participates in secondary metabolite biosynthesis. The protein operates within alkaloid biosynthesis. Its function is as follows. Reverse prenyltransferase; part of the gene cluster that mediates the biosynthesis of echinulin family alkaloid. The pathway begins with the biosynthesis of the cyclic dipeptide cyclo-L-Trp-L-Ala (cyclo-TA) by the NRPS criC via condensation of L-alanine and L-tryptophan. The prenyltransferase criA then catalyzes the first prenylation step, a reverse prenylation reaction at C2, to yield preechinulin. Preechinulin is the substrate of the cytochrome P450 monooxygenase criE that catalyzes the formation of the double bond between C10 and C11 to produce neoechulin A. The unique prenyltransferase criF functions as a competitive enzyme with criE for preechinulin metabolization and uses preechinulin for effective regiospecific prenylations. Preechinulin is prenylated by criF at C5 or C7. C7-prenylation leads to accumulation of tardioxopiperazine B without further modification by criF. In contrast, the C5-prenylated tardioxopiperazine A can be prenylated again by criF, predominantly at C7 to form echinulin or less frequently at C4 to give variecolorin L. CriF also accepts neoechilunin A to produce varlecolorin G (prenylation at C5) or isoechinulin A (prenylation at C7). CriF further converts isoechinulin A into dehydroechinulin. Moreover, a yet unidentified enzyme can also convert neoechilunin A into neoechilunin B by introducing a double bond between positions C14 and C17 and thus provides a further substrate to criF for C5 and C7 prenylation. The protein is Reverse prenyltransferase criA of Aspergillus cristatus (Chinese Fuzhuan brick tea-fermentation fungus).